A 270-amino-acid polypeptide reads, in one-letter code: 3-methyl-2-oxobutanoate hydroxymethyltransferase (270 aa).

Mg(2+) contacts are provided by Asp-43 and Asp-82. 3-methyl-2-oxobutanoate contacts are provided by residues 43 to 44, Asp-82, and Lys-112; that span reads DS. Glu-114 is a binding site for Mg(2+). Glu-179 acts as the Proton acceptor in catalysis.

This sequence belongs to the PanB family. As to quaternary structure, homodecamer; pentamer of dimers. It depends on Mg(2+) as a cofactor.

Its subcellular location is the cytoplasm. The enzyme catalyses 3-methyl-2-oxobutanoate + (6R)-5,10-methylene-5,6,7,8-tetrahydrofolate + H2O = 2-dehydropantoate + (6S)-5,6,7,8-tetrahydrofolate. The protein operates within cofactor biosynthesis; (R)-pantothenate biosynthesis; (R)-pantoate from 3-methyl-2-oxobutanoate: step 1/2. Catalyzes the reversible reaction in which hydroxymethyl group from 5,10-methylenetetrahydrofolate is transferred onto alpha-ketoisovalerate to form ketopantoate. The chain is 3-methyl-2-oxobutanoate hydroxymethyltransferase from Staphylococcus carnosus (strain TM300).